The chain runs to 157 residues: Large ribosomal subunit protein uL11 (157 aa).

The protein belongs to the universal ribosomal protein uL11 family.

Functionally, this protein binds directly to 26S ribosomal RNA. The sequence is that of Large ribosomal subunit protein uL11 (RPL12) from Chlamydomonas reinhardtii (Chlamydomonas smithii).